Consider the following 182-residue polypeptide: UPF0397 protein SPT_0523 (182 aa).

A run of 5 helical transmembrane segments spans residues 10-30, 46-66, 73-93, 109-129, and 148-168; these read VVAVGIGAALFVVIGMINIPT, LLSIIFGPIIGLLVGLIGHAI, YGLWWTWIIASGLFGLVVGLF, ILIFNLIQLLANALVWGVLAP, and IVAGIANGVSVAIAGTLLLLA.

Belongs to the UPF0397 family.

The protein resides in the cell membrane. This Streptococcus pneumoniae (strain Taiwan19F-14) protein is UPF0397 protein SPT_0523.